Here is a 259-residue protein sequence, read N- to C-terminus: Gem-associated protein 2 (259 aa).

Belongs to the gemin-2 family. As to quaternary structure, forms a stable heteromeric complex with survival of motor neuron protein (SMN), GEMIN3 and GEMIN4. The SMN complex is associated with the spliceosomal snRNAs U1 and U5 in the cytoplasm of oocytes.

It is found in the nucleus. The protein resides in the gem. It localises to the cytoplasm. Functionally, the SMN complex catalyzes the assembly of small nuclear ribonucleoproteins (snRNPs), the building blocks of the spliceosome, and thereby plays an important role in the splicing of cellular pre-mRNAs. Most spliceosomal snRNPs contain a common set of Sm proteins SNRPB, SNRPD1, SNRPD2, SNRPD3, SNRPE, SNRPF and SNRPG that assemble in a heptameric protein ring on the Sm site of the small nuclear RNA to form the core snRNP (Sm core). In the cytosol, the Sm proteins SNRPD1, SNRPD2, SNRPE, SNRPF and SNRPG (5Sm) are trapped in an inactive 6S pICln-Sm complex by the chaperone CLNS1A that controls the assembly of the core snRNP. To assemble core snRNPs, the SMN complex accepts the trapped 5Sm proteins from CLNS1A. Binding of snRNA inside 5Sm ultimately triggers eviction of the SMN complex, thereby allowing binding of SNRPD3 and SNRPB to complete assembly of the core snRNP. Within the SMN complex, GEMIN2 constrains the conformation of 5Sm, thereby promoting 5Sm binding to snRNA containing the snRNP code (a nonameric Sm site and a 3'-adjacent stem-loop), thus preventing progression of assembly until a cognate substrate is bound. The sequence is that of Gem-associated protein 2 (gemin2) from Xenopus laevis (African clawed frog).